The sequence spans 474 residues: tRNA-2-methylthio-N(6)-dimethylallyladenosine synthase (474 aa).

In terms of domain architecture, MTTase N-terminal spans 3-120 (KKLHIKTWGC…LPEMINHVQE (118 aa)). Cysteine 12, cysteine 49, cysteine 83, cysteine 157, cysteine 161, and cysteine 164 together coordinate [4Fe-4S] cluster. The region spanning 143 to 375 (RAEGPTAFVS…QQRISQQAME (233 aa)) is the Radical SAM core domain. Residues 378 to 441 (RKMVGTVQRV…ASSLRGILLR (64 aa)) form the TRAM domain.

The protein belongs to the methylthiotransferase family. MiaB subfamily. As to quaternary structure, monomer. [4Fe-4S] cluster is required as a cofactor.

It localises to the cytoplasm. It catalyses the reaction N(6)-dimethylallyladenosine(37) in tRNA + (sulfur carrier)-SH + AH2 + 2 S-adenosyl-L-methionine = 2-methylsulfanyl-N(6)-dimethylallyladenosine(37) in tRNA + (sulfur carrier)-H + 5'-deoxyadenosine + L-methionine + A + S-adenosyl-L-homocysteine + 2 H(+). In terms of biological role, catalyzes the methylthiolation of N6-(dimethylallyl)adenosine (i(6)A), leading to the formation of 2-methylthio-N6-(dimethylallyl)adenosine (ms(2)i(6)A) at position 37 in tRNAs that read codons beginning with uridine. The chain is tRNA-2-methylthio-N(6)-dimethylallyladenosine synthase from Yersinia pseudotuberculosis serotype O:3 (strain YPIII).